We begin with the raw amino-acid sequence, 277 residues long: Large ribosomal subunit protein uL2 (277 aa).

The interval 223–277 is disordered; it reads VVMNPIDHPHGGGEGRTSGGRHPVTPWGKPTKGKKTRSNKSTNKFILISRHKRKK.

The protein belongs to the universal ribosomal protein uL2 family. Part of the 50S ribosomal subunit. Forms a bridge to the 30S subunit in the 70S ribosome.

One of the primary rRNA binding proteins. Required for association of the 30S and 50S subunits to form the 70S ribosome, for tRNA binding and peptide bond formation. It has been suggested to have peptidyltransferase activity; this is somewhat controversial. Makes several contacts with the 16S rRNA in the 70S ribosome. The protein is Large ribosomal subunit protein uL2 of Nitrobacter hamburgensis (strain DSM 10229 / NCIMB 13809 / X14).